We begin with the raw amino-acid sequence, 115 residues long: Large ribosomal subunit protein uL22 (115 aa).

It belongs to the universal ribosomal protein uL22 family. As to quaternary structure, part of the 50S ribosomal subunit.

Its function is as follows. This protein binds specifically to 23S rRNA; its binding is stimulated by other ribosomal proteins, e.g. L4, L17, and L20. It is important during the early stages of 50S assembly. It makes multiple contacts with different domains of the 23S rRNA in the assembled 50S subunit and ribosome. Functionally, the globular domain of the protein is located near the polypeptide exit tunnel on the outside of the subunit, while an extended beta-hairpin is found that lines the wall of the exit tunnel in the center of the 70S ribosome. The protein is Large ribosomal subunit protein uL22 of Endomicrobium trichonymphae.